The chain runs to 319 residues: MSDYQVLLYYKYTTIDDPETFAKEHLAACKEMELKGRILVATEGINGTVSGTVEATNKYMDYMANDARFADMVFKIDAADAHAFKKMHVRPRAEIVSLSLEEDVNPLEVTGTYLEPSEFREALLDEDTVILDARNDYEFDIGHFRGAVRPDIQNFRELPGWIEDNREQLADKKIVTYCTGGIRCEKFSGWLKTAGFDDVSQLHGGIATYGKNEETKGELWDGQMYVFDERIAVPINQVNPTIVGKDYFDGTPCERYINCANPYCNKQILASIENEKKYLRSCSHDCRVHPANLYTKNLSKEEFTERLQAIDETLPEMVQ.

Positions 124–218 constitute a Rhodanese domain; sequence LDEDTVILDA…YGKNEETKGE (95 aa). Cysteine 178 (cysteine persulfide intermediate) is an active-site residue.

This sequence belongs to the TrhO family.

The enzyme catalyses uridine(34) in tRNA + AH2 + O2 = 5-hydroxyuridine(34) in tRNA + A + H2O. Catalyzes oxygen-dependent 5-hydroxyuridine (ho5U) modification at position 34 in tRNAs. The sequence is that of tRNA uridine(34) hydroxylase from Listeria monocytogenes serotype 4b (strain CLIP80459).